The chain runs to 355 residues: Uroporphyrinogen decarboxylase (355 aa).

Substrate-binding positions include 27 to 31 (RQAGR), Asp-77, Tyr-154, Thr-209, and His-327.

The protein belongs to the uroporphyrinogen decarboxylase family. Homodimer.

Its subcellular location is the cytoplasm. The enzyme catalyses uroporphyrinogen III + 4 H(+) = coproporphyrinogen III + 4 CO2. Its pathway is porphyrin-containing compound metabolism; protoporphyrin-IX biosynthesis; coproporphyrinogen-III from 5-aminolevulinate: step 4/4. Catalyzes the decarboxylation of four acetate groups of uroporphyrinogen-III to yield coproporphyrinogen-III. This Erwinia tasmaniensis (strain DSM 17950 / CFBP 7177 / CIP 109463 / NCPPB 4357 / Et1/99) protein is Uroporphyrinogen decarboxylase.